Reading from the N-terminus, the 217-residue chain is Thymidylate kinase (217 aa).

16–23 (GIDGAGKT) contacts ATP.

Belongs to the thymidylate kinase family.

It carries out the reaction dTMP + ATP = dTDP + ADP. Its function is as follows. Phosphorylation of dTMP to form dTDP in both de novo and salvage pathways of dTTP synthesis. This Xylella fastidiosa (strain M12) protein is Thymidylate kinase.